We begin with the raw amino-acid sequence, 197 residues long: Large ribosomal subunit protein bL25 (197 aa).

The protein belongs to the bacterial ribosomal protein bL25 family. CTC subfamily. In terms of assembly, part of the 50S ribosomal subunit; part of the 5S rRNA/L5/L18/L25 subcomplex. Contacts the 5S rRNA. Binds to the 5S rRNA independently of L5 and L18.

This is one of the proteins that binds to the 5S RNA in the ribosome where it forms part of the central protuberance. The protein is Large ribosomal subunit protein bL25 of Citrifermentans bemidjiense (strain ATCC BAA-1014 / DSM 16622 / JCM 12645 / Bem) (Geobacter bemidjiensis).